We begin with the raw amino-acid sequence, 72 residues long: Translation initiation factor IF-1 1 (72 aa).

Residues 1–72 form the S1-like domain; it reads MSKDDVIQMA…TRARIIFRAK (72 aa).

The protein belongs to the IF-1 family. In terms of assembly, component of the 30S ribosomal translation pre-initiation complex which assembles on the 30S ribosome in the order IF-2 and IF-3, IF-1 and N-formylmethionyl-tRNA(fMet); mRNA recruitment can occur at any time during PIC assembly.

It localises to the cytoplasm. In terms of biological role, one of the essential components for the initiation of protein synthesis. Stabilizes the binding of IF-2 and IF-3 on the 30S subunit to which N-formylmethionyl-tRNA(fMet) subsequently binds. Helps modulate mRNA selection, yielding the 30S pre-initiation complex (PIC). Upon addition of the 50S ribosomal subunit IF-1, IF-2 and IF-3 are released leaving the mature 70S translation initiation complex. The sequence is that of Translation initiation factor IF-1 1 from Polynucleobacter asymbioticus (strain DSM 18221 / CIP 109841 / QLW-P1DMWA-1) (Polynucleobacter necessarius subsp. asymbioticus).